We begin with the raw amino-acid sequence, 955 residues long: Glycine dehydrogenase (decarboxylating) (955 aa).

Position 702 is an N6-(pyridoxal phosphate)lysine (Lys702).

It belongs to the GcvP family. As to quaternary structure, the glycine cleavage system is composed of four proteins: P, T, L and H. It depends on pyridoxal 5'-phosphate as a cofactor.

The catalysed reaction is N(6)-[(R)-lipoyl]-L-lysyl-[glycine-cleavage complex H protein] + glycine + H(+) = N(6)-[(R)-S(8)-aminomethyldihydrolipoyl]-L-lysyl-[glycine-cleavage complex H protein] + CO2. Functionally, the glycine cleavage system catalyzes the degradation of glycine. The P protein binds the alpha-amino group of glycine through its pyridoxal phosphate cofactor; CO(2) is released and the remaining methylamine moiety is then transferred to the lipoamide cofactor of the H protein. The sequence is that of Glycine dehydrogenase (decarboxylating) from Stenotrophomonas maltophilia (strain K279a).